Here is a 157-residue protein sequence, read N- to C-terminus: Small ribosomal subunit protein uS7 (157 aa).

The protein belongs to the universal ribosomal protein uS7 family. In terms of assembly, part of the 30S ribosomal subunit. Contacts proteins S9 and S11.

Its function is as follows. One of the primary rRNA binding proteins, it binds directly to 16S rRNA where it nucleates assembly of the head domain of the 30S subunit. Is located at the subunit interface close to the decoding center, probably blocks exit of the E-site tRNA. The polypeptide is Small ribosomal subunit protein uS7 (Blochmanniella floridana).